The following is a 148-amino-acid chain: Large ribosomal subunit protein uL15 (148 aa).

Residues 1-30 (MPSRLRKTRKLRGHVSHGHGRIGKHRKHPG) show a composition bias toward basic residues. Positions 1-38 (MPSRLRKTRKLRGHVSHGHGRIGKHRKHPGGRGNAGGL) are disordered. His39 bears the (3S)-3-hydroxyhistidine mark. An N6-acetyllysine mark is found at Lys47 and Lys55. Ser68 carries the phosphoserine modification. Lys110 is modified (N6-acetyllysine).

The protein belongs to the universal ribosomal protein uL15 family. Component of the large ribosomal subunit. Hydroxylated on His-39 by MINA.

Its subcellular location is the cytoplasm. Its function is as follows. Component of the large ribosomal subunit. The ribosome is a large ribonucleoprotein complex responsible for the synthesis of proteins in the cell. This Homo sapiens (Human) protein is Large ribosomal subunit protein uL15 (RPL27A).